The chain runs to 825 residues: NT-3 growth factor receptor (825 aa).

A signal peptide spans 1–31 (MDVSLCPAKCSFWRIFLLGSVWLDYVGSVLA). 2 cysteine pairs are disulfide-bonded: Cys32/Cys38 and Cys36/Cys45. The Extracellular segment spans residues 32 to 429 (CPANCVCSKT…TVTHKPEEDT (398 aa)). 3 N-linked (GlcNAc...) asparagine glycosylation sites follow: Asn68, Asn72, and Asn79. LRR repeat units lie at residues 104-125 (GLQKLTIKNSGLRSIQPRAFAK) and 128-149 (HLRYINLSSNRLTTLSWQLFQT). 2 N-linked (GlcNAc...) asparagine glycosylation sites follow: Asn133 and Asn163. Positions 160–209 (NFFNCSCDIRWMQLWQEQGEAKLNSQNLYCINTDGSQLPLFRMNISQCDL) constitute an LRRCT domain. Disulfide bonds link Cys164-Cys189 and Cys166-Cys207. Residues Asn203, Asn218, Asn232, Asn259, Asn267, Asn272, and Asn294 are each glycosylated (N-linked (GlcNAc...) asparagine). 2 Ig-like C2-type domains span residues 210–300 (PEIS…VALT) and 309–382 (SLEE…IAKN). Cys231 and Cys284 are joined by a disulfide. A disulfide bridge links Cys320 with Cys362. Residues Asn375 and Asn388 are each glycosylated (N-linked (GlcNAc...) asparagine). Residues 430-453 (FGVSIAVGLAAFACVLLVVLFVMI) traverse the membrane as a helical segment. Topologically, residues 454–825 (NKYGRRSKFG…ATPIYLDILG (372 aa)) are cytoplasmic. Ser493 carries the post-translational modification Phosphoserine. The residue at position 516 (Tyr516) is a Phosphotyrosine; by autocatalysis. A Protein kinase domain is found at 538–825 (IVLKRELGEG…ATPIYLDILG (288 aa)). ATP contacts are provided by residues 544–552 (LGEGAFGKV) and Lys572. Asp679 acts as the Proton acceptor in catalysis. Phosphotyrosine; by autocatalysis occurs at positions 705, 709, and 710.

This sequence belongs to the protein kinase superfamily. Tyr protein kinase family. Insulin receptor subfamily. In terms of assembly, exists in a dynamic equilibrium between monomeric (low affinity) and dimeric (high affinity) structures. Binds SH2B2. Interacts with SQSTM1 and KIDINS220. Interacts with PTPRS. Interacts with MAPK8IP3/JIP3. Ligand-mediated auto-phosphorylation.

It is found in the membrane. It catalyses the reaction L-tyrosyl-[protein] + ATP = O-phospho-L-tyrosyl-[protein] + ADP + H(+). In terms of biological role, receptor tyrosine kinase involved in nervous system and probably heart development. Upon binding of its ligand NTF3/neurotrophin-3, NTRK3 autophosphorylates and activates different signaling pathways, including the phosphatidylinositol 3-kinase/AKT and the MAPK pathways, that control cell survival and differentiation. The chain is NT-3 growth factor receptor (NTRK3) from Pan troglodytes (Chimpanzee).